The chain runs to 1039 residues: Probable inorganic carbon transporter subunit DabA 1 (1039 aa).

Zn(2+) is bound by residues cysteine 462, aspartate 464, histidine 721, and cysteine 736.

Belongs to the inorganic carbon transporter (TC 9.A.2) DabA family. In terms of assembly, forms a complex with DabB. Zn(2+) is required as a cofactor.

The protein localises to the cell inner membrane. Its function is as follows. Part of an energy-coupled inorganic carbon pump. This is Probable inorganic carbon transporter subunit DabA 1 from Nitrobacter hamburgensis (strain DSM 10229 / NCIMB 13809 / X14).